The following is a 474-amino-acid chain: tRNA-2-methylthio-N(6)-dimethylallyladenosine synthase (474 aa).

Residues 3–120 (KKLHIKTWGC…LPEMINSVRG (118 aa)) enclose the MTTase N-terminal domain. [4Fe-4S] cluster-binding residues include Cys-12, Cys-49, Cys-83, Cys-157, Cys-161, and Cys-164. Positions 143 to 375 (RAEGPTAFVS…QERINQQAMA (233 aa)) constitute a Radical SAM core domain. Residues 378-441 (RRMLGTTQRI…PNSLRGKVVR (64 aa)) form the TRAM domain.

Belongs to the methylthiotransferase family. MiaB subfamily. Monomer. It depends on [4Fe-4S] cluster as a cofactor.

It is found in the cytoplasm. It carries out the reaction N(6)-dimethylallyladenosine(37) in tRNA + (sulfur carrier)-SH + AH2 + 2 S-adenosyl-L-methionine = 2-methylsulfanyl-N(6)-dimethylallyladenosine(37) in tRNA + (sulfur carrier)-H + 5'-deoxyadenosine + L-methionine + A + S-adenosyl-L-homocysteine + 2 H(+). In terms of biological role, catalyzes the methylthiolation of N6-(dimethylallyl)adenosine (i(6)A), leading to the formation of 2-methylthio-N6-(dimethylallyl)adenosine (ms(2)i(6)A) at position 37 in tRNAs that read codons beginning with uridine. The sequence is that of tRNA-2-methylthio-N(6)-dimethylallyladenosine synthase from Salmonella enteritidis PT4 (strain P125109).